The primary structure comprises 343 residues: S-adenosylmethionine:tRNA ribosyltransferase-isomerase (343 aa).

Belongs to the QueA family. In terms of assembly, monomer.

Its subcellular location is the cytoplasm. The enzyme catalyses 7-aminomethyl-7-carbaguanosine(34) in tRNA + S-adenosyl-L-methionine = epoxyqueuosine(34) in tRNA + adenine + L-methionine + 2 H(+). It functions in the pathway tRNA modification; tRNA-queuosine biosynthesis. In terms of biological role, transfers and isomerizes the ribose moiety from AdoMet to the 7-aminomethyl group of 7-deazaguanine (preQ1-tRNA) to give epoxyqueuosine (oQ-tRNA). The protein is S-adenosylmethionine:tRNA ribosyltransferase-isomerase of Hydrogenobaculum sp. (strain Y04AAS1).